Consider the following 330-residue polypeptide: Phosphate acyltransferase (330 aa).

This sequence belongs to the PlsX family. Homodimer. Probably interacts with PlsY.

It is found in the cytoplasm. It carries out the reaction a fatty acyl-[ACP] + phosphate = an acyl phosphate + holo-[ACP]. It functions in the pathway lipid metabolism; phospholipid metabolism. Functionally, catalyzes the reversible formation of acyl-phosphate (acyl-PO(4)) from acyl-[acyl-carrier-protein] (acyl-ACP). This enzyme utilizes acyl-ACP as fatty acyl donor, but not acyl-CoA. The sequence is that of Phosphate acyltransferase from Bacillus licheniformis (strain ATCC 14580 / DSM 13 / JCM 2505 / CCUG 7422 / NBRC 12200 / NCIMB 9375 / NCTC 10341 / NRRL NRS-1264 / Gibson 46).